The sequence spans 125 residues: Small ribosomal subunit protein uS13 (125 aa).

Residues histidine 91–lysine 125 are disordered.

This sequence belongs to the universal ribosomal protein uS13 family. In terms of assembly, part of the 30S ribosomal subunit. Forms a loose heterodimer with protein S19. Forms two bridges to the 50S subunit in the 70S ribosome.

Located at the top of the head of the 30S subunit, it contacts several helices of the 16S rRNA. In the 70S ribosome it contacts the 23S rRNA (bridge B1a) and protein L5 of the 50S subunit (bridge B1b), connecting the 2 subunits; these bridges are implicated in subunit movement. Contacts the tRNAs in the A and P-sites. The polypeptide is Small ribosomal subunit protein uS13 (Chloroherpeton thalassium (strain ATCC 35110 / GB-78)).